We begin with the raw amino-acid sequence, 907 residues long: Avirulence protein A (907 aa).

Composition is skewed to polar residues over residues 1 to 11 (MWNVSKSSNNL) and 124 to 136 (AGSN…SSDP). Disordered regions lie at residues 1–47 (MWNV…HDQL) and 116–157 (NDDF…KKSY).

The chain is Avirulence protein A (avrA) from Pseudomonas savastanoi pv. glycinea (Pseudomonas syringae pv. glycinea).